The following is a 519-amino-acid chain: MEFPEHSRHLLQCLSEQRHQGFLCDCTVLVGDAHFRAHRAVLASCSMYFHLFYKDQLDKKNIVYLNSDIVTAPAFALLLEFMYEGKLQFKDLPIEDVLAAASYLHMYDIVKVCKKKLKEKATTEADSTKKEEDTLSCSDKIECLSDGSSHMAGDLPSDEDDVEEEKINSKTDLATESGNMWIRLSSDSASIPQTGGEVDTHTTAAGKTADSPCSSTGSLSHRSATSMGDSTDVDCVLDLSVKSSLSGTETLNNSYLSSQEILRNSLVQVKIEREASCEDNDIHTSEYDIERNTVKENVSSNIRAPYEPVHLAPIREDSVLRELDHDDKAINDDMITPENERVQMEANIDNSLLPYVQNILSPAGQIFMCPLCNKVFPSPHILQIHLSTHFREQEGIRSKPTNDVHVPTCSLCGKTFSCMYTLKRHERTHSGEKPFTCTQCGKSFQYSHNLSRHAVVHTREKPHACKWCERRFTQSGDLYRHIRKFHCELVNSLSVKSETLGLPAVRDWTLEDSSQELWK.

A BTB domain is found at 24 to 91 (CDCTVLVGDA…MYEGKLQFKD (68 aa)). The interval 189–227 (ASIPQTGGEVDTHTTAAGKTADSPCSSTGSLSHRSATSM) is disordered. Residues 201–227 (HTTAAGKTADSPCSSTGSLSHRSATSM) show a composition bias toward polar residues. C2H2-type zinc fingers lie at residues 367–389 (FMCP…LSTH), 407–429 (PTCS…ERTH), 435–457 (FTCT…AVVH), and 463–486 (HACK…RKFH).

Belongs to the krueppel C2H2-type zinc-finger protein family. ZBTB18 subfamily.

The protein resides in the nucleus. In terms of biological role, transcriptional repressor that plays a role in various developmental processes. Specifically binds the consensus DNA sequence 5'-[AC]ACATCTG[GT][AC]-3' which contains the E box core, and acts by recruiting chromatin remodeling multiprotein complexes. The protein is Zinc finger and BTB domain-containing protein 18.3 (zbtb18.3) of Xenopus laevis (African clawed frog).